Consider the following 117-residue polypeptide: Photosystem II reaction center Psb28 protein (117 aa).

The protein belongs to the Psb28 family. Part of the photosystem II complex.

It is found in the cellular thylakoid membrane. This is Photosystem II reaction center Psb28 protein from Prochlorococcus marinus (strain MIT 9312).